The primary structure comprises 235 residues: MKYKRILLKLSGEALMGEQKYGIDSQVLIRYANEIKAIADKGVEITIVVGGGNIYRGIEAAATGIDRVQGDYMGMLATVINCMALQSALENIGLDTRLMSGIKIEQVCESFIRRRAIRHLEKGRIVMFGAGTGNPYFTTDTAASLRAIEIEAEVVLKGTRVDGVYTADPEKDPTATRYTTITFDEAYAKGLNIMDMTAFTLCKENELPIIIFDMNRPGNLLKVLEGESVGTLVKL.

Residue 9–12 (KLSG) participates in ATP binding. Gly51 lines the UMP pocket. The ATP site is built by Gly52 and Arg56. UMP is bound by residues Asp71 and 132-139 (TGNPYFTT). Residues Thr159, Tyr165, and Asp168 each coordinate ATP.

Belongs to the UMP kinase family. As to quaternary structure, homohexamer.

The protein resides in the cytoplasm. The catalysed reaction is UMP + ATP = UDP + ADP. It participates in pyrimidine metabolism; CTP biosynthesis via de novo pathway; UDP from UMP (UMPK route): step 1/1. Its activity is regulated as follows. Inhibited by UTP. Functionally, catalyzes the reversible phosphorylation of UMP to UDP. This Cytophaga hutchinsonii (strain ATCC 33406 / DSM 1761 / CIP 103989 / NBRC 15051 / NCIMB 9469 / D465) protein is Uridylate kinase.